A 436-amino-acid chain; its full sequence is MSDRQQVTNAKGERIAIVAGLRTPFAKQATAFHGVSALDMGKMVVNELLARSELDPKLIEQLVYGQVVQMPAAPNIAREIVLGTGMDVSTDAYSVTRACATSFQSAVNVAESIMTGNIEIGIAGGADSSSVLPIGVSKKLAHALVDLNKARSFGQKLQIFRRLGIKDLLPVPPAVAEYSTGLSMGQTAEQMAKTYNISRADQDALAHRSHTLASETWASGHLRDEVMVAHVPPYKQFIERDNNIRENSDLSSYAKLRPAFDKKHGSVTAANSTPLTDGASAIILMSEGRAKALGYQPIGYIKSYAFTAIDVWQDMLMGPSYATPLALKRAGMELEDLTLIEMHEAFAAQTLANMQMFASKKFAEEKLGRNRAIGEIDMSKFNVLGGSLAYGHPFAATGTRLITQVCRELKRRGGGTGLATACAAGGLGAAMIVEVE.

The active-site Acyl-thioester intermediate is the C99. Catalysis depends on proton acceptor residues H392 and C422.

This sequence belongs to the thiolase-like superfamily. Thiolase family. Heterotetramer of two alpha chains (FadJ) and two beta chains (FadI).

It localises to the cytoplasm. The catalysed reaction is an acyl-CoA + acetyl-CoA = a 3-oxoacyl-CoA + CoA. It participates in lipid metabolism; fatty acid beta-oxidation. In terms of biological role, catalyzes the final step of fatty acid oxidation in which acetyl-CoA is released and the CoA ester of a fatty acid two carbons shorter is formed. This Shewanella sp. (strain ANA-3) protein is 3-ketoacyl-CoA thiolase.